The following is a 490-amino-acid chain: Tektin-3 (490 aa).

O-linked (GalNAc...) threonine glycans are attached at residues Thr-7 and Thr-9. Residues Asn-41, Asn-86, Asn-111, and Asn-276 are each glycosylated (N-linked (GlcNAc...) asparagine). The stretch at 419-456 (RLVNEVYEVDETIQTLQQRLRDSEDTLQSLAHTKATLE) forms a coiled coil.

This sequence belongs to the tektin family. As to quaternary structure, microtubule inner protein component of sperm flagellar doublet microtubules. Interacts with TEKT1, TEKT2, TEKT4 and TEKT5. Interacts with CCDC38. N- and O-glycosylated. In terms of processing, may be proteolytically processed during the epididymal transit of spermatozoa. Post-translationally, ubiquitinated, leading to its degradation. Deubiquitinated by USP16, promoting its stability. As to expression, expressed in epididymal sperm (at protein level).

It localises to the cytoplasm. Its subcellular location is the cytoskeleton. It is found in the cilium axoneme. The protein localises to the flagellum axoneme. The protein resides in the cytoplasmic vesicle. It localises to the secretory vesicle. Its subcellular location is the acrosome outer membrane. Its function is as follows. Microtubule inner protein (MIP) part of the dynein-decorated doublet microtubules (DMTs) in cilia and flagellar axoneme. Forms filamentous polymers in the walls of ciliary and flagellar microtubules. Required for normal sperm mobility. This chain is Tektin-3 (Tekt3), found in Rattus norvegicus (Rat).